The chain runs to 214 residues: tRNA (guanine-N(7)-)-methyltransferase (214 aa).

The S-adenosyl-L-methionine site is built by glutamate 44, glutamate 69, aspartate 96, and aspartate 118. Aspartate 118 is an active-site residue. Substrate is bound by residues lysine 122, aspartate 154, and 191–194 (TEYE).

Belongs to the class I-like SAM-binding methyltransferase superfamily. TrmB family.

The catalysed reaction is guanosine(46) in tRNA + S-adenosyl-L-methionine = N(7)-methylguanosine(46) in tRNA + S-adenosyl-L-homocysteine. Its pathway is tRNA modification; N(7)-methylguanine-tRNA biosynthesis. Functionally, catalyzes the formation of N(7)-methylguanine at position 46 (m7G46) in tRNA. This Listeria monocytogenes serotype 4a (strain HCC23) protein is tRNA (guanine-N(7)-)-methyltransferase.